A 415-amino-acid polypeptide reads, in one-letter code: Type II methyltransferase M.DdeI (415 aa).

Residues 1–373 (MNIIDLFAGC…ERISWYFENI (373 aa)) form the SAM-dependent MTase C5-type domain. The active site involves cysteine 76.

It belongs to the class I-like SAM-binding methyltransferase superfamily. C5-methyltransferase family.

It carries out the reaction a 2'-deoxycytidine in DNA + S-adenosyl-L-methionine = a 5-methyl-2'-deoxycytidine in DNA + S-adenosyl-L-homocysteine + H(+). In terms of biological role, a methylase that recognizes the double-stranded sequence 5'-CTNAG-3', methylates C-1 on both strands, and protects the DNA from cleavage by the DdeI endonuclease. The protein is Type II methyltransferase M.DdeI (ddeIM) of Desulfomicrobium norvegicum (strain DSM 1741 / NCIMB 8310) (Desulfovibrio baculatus (strain Norway 4)).